Consider the following 446-residue polypeptide: NAD kinase (446 aa).

Residues Ser-46, Ser-48, Ser-50, Ser-55, and Ser-64 each carry the phosphoserine modification.

It belongs to the NAD kinase family. A divalent metal cation serves as cofactor. As to expression, widely expressed but not detected in skeletal muscle.

The enzyme catalyses NAD(+) + ATP = ADP + NADP(+) + H(+). The chain is NAD kinase (NADK) from Homo sapiens (Human).